Here is a 462-residue protein sequence, read N- to C-terminus: 3-isopropylmalate dehydratase large subunit (462 aa).

Residues Cys337, Cys397, and Cys400 each contribute to the [4Fe-4S] cluster site.

The protein belongs to the aconitase/IPM isomerase family. LeuC type 1 subfamily. In terms of assembly, heterodimer of LeuC and LeuD. The cofactor is [4Fe-4S] cluster.

It catalyses the reaction (2R,3S)-3-isopropylmalate = (2S)-2-isopropylmalate. It functions in the pathway amino-acid biosynthesis; L-leucine biosynthesis; L-leucine from 3-methyl-2-oxobutanoate: step 2/4. Functionally, catalyzes the isomerization between 2-isopropylmalate and 3-isopropylmalate, via the formation of 2-isopropylmaleate. This Listeria monocytogenes serotype 4b (strain CLIP80459) protein is 3-isopropylmalate dehydratase large subunit.